The chain runs to 97 residues: Small ribosomal subunit protein bS21 (97 aa).

Positions 37 to 97 (EKPSVRKARE…APASSPTTTA (61 aa)) are disordered. Residues 76–97 (RAVAPRRPAAAPAPASSPTTTA) show a composition bias toward low complexity.

Belongs to the bacterial ribosomal protein bS21 family.

The sequence is that of Small ribosomal subunit protein bS21 from Methylobacterium sp. (strain 4-46).